Reading from the N-terminus, the 111-residue chain is Probable 4-amino-4-deoxy-L-arabinose-phosphoundecaprenol flippase subunit ArnE (111 aa).

The Cytoplasmic segment spans residues 1–35; it reads MIWLTLVFASLLSVAGQLCQKQATCFVAINKRRKH. A helical transmembrane segment spans residues 36-56; sequence IVLWLGLALACLGLAMVLWLL. One can recognise an EamA domain in the interval 40–109; it reads LGLALACLGL…IIGGIVILGS (70 aa). At 57-60 the chain is on the periplasmic side; the sequence is VLQN. A helical transmembrane segment spans residues 61–81; the sequence is VPVGIAYPMLSLNFVWVTLAA. Over 82–87 the chain is Cytoplasmic; that stretch reads VKLWHE. A helical transmembrane segment spans residues 88 to 108; the sequence is PVSPRHWCGVAFIIGGIVILG. Topologically, residues 109–111 are periplasmic; sequence STV.

It belongs to the ArnE family. As to quaternary structure, heterodimer of ArnE and ArnF.

The protein resides in the cell inner membrane. It participates in bacterial outer membrane biogenesis; lipopolysaccharide biosynthesis. In terms of biological role, translocates 4-amino-4-deoxy-L-arabinose-phosphoundecaprenol (alpha-L-Ara4N-phosphoundecaprenol) from the cytoplasmic to the periplasmic side of the inner membrane. The polypeptide is Probable 4-amino-4-deoxy-L-arabinose-phosphoundecaprenol flippase subunit ArnE (Escherichia coli (strain ATCC 8739 / DSM 1576 / NBRC 3972 / NCIMB 8545 / WDCM 00012 / Crooks)).